The sequence spans 394 residues: Elongation factor Tu (394 aa).

Positions 10-204 (KPHINVGTIG…HLDNYIPEPK (195 aa)) constitute a tr-type G domain. Residues 19-26 (GHVDHGKT) form a G1 region. 19-26 (GHVDHGKT) is a binding site for GTP. Position 26 (threonine 26) interacts with Mg(2+). Residues 60–64 (GITIN) are G2. The G3 stretch occupies residues 81-84 (DCPG). GTP is bound by residues 81 to 85 (DCPGH) and 136 to 139 (NKCD). A G4 region spans residues 136–139 (NKCD). Residues 174 to 176 (SAL) are G5.

This sequence belongs to the TRAFAC class translation factor GTPase superfamily. Classic translation factor GTPase family. EF-Tu/EF-1A subfamily. In terms of assembly, monomer.

The protein localises to the cytoplasm. It carries out the reaction GTP + H2O = GDP + phosphate + H(+). Its function is as follows. GTP hydrolase that promotes the GTP-dependent binding of aminoacyl-tRNA to the A-site of ribosomes during protein biosynthesis. This Wigglesworthia glossinidia brevipalpis protein is Elongation factor Tu.